Here is a 435-residue protein sequence, read N- to C-terminus: Methylenetetrahydrofolate--tRNA-(uracil-5-)-methyltransferase TrmFO (435 aa).

10 to 15 (GAGLAG) serves as a coordination point for FAD.

It belongs to the MnmG family. TrmFO subfamily. It depends on FAD as a cofactor.

It localises to the cytoplasm. It catalyses the reaction uridine(54) in tRNA + (6R)-5,10-methylene-5,6,7,8-tetrahydrofolate + NADH + H(+) = 5-methyluridine(54) in tRNA + (6S)-5,6,7,8-tetrahydrofolate + NAD(+). The catalysed reaction is uridine(54) in tRNA + (6R)-5,10-methylene-5,6,7,8-tetrahydrofolate + NADPH + H(+) = 5-methyluridine(54) in tRNA + (6S)-5,6,7,8-tetrahydrofolate + NADP(+). Its function is as follows. Catalyzes the folate-dependent formation of 5-methyl-uridine at position 54 (M-5-U54) in all tRNAs. This is Methylenetetrahydrofolate--tRNA-(uracil-5-)-methyltransferase TrmFO from Geotalea uraniireducens (strain Rf4) (Geobacter uraniireducens).